Reading from the N-terminus, the 174-residue chain is MGQSQSQIFEDLISNSSFSNEEIERIRKRFIKIDANQSGSIDRNEFLSIPSVASNPLASRLFSVVDEDGGGDVDFQEFINSLSVFSVHGNKEEKLKFAFKIYDIDRDGYISNGELYLVLKMMVGTNLREDQLQQIVDKTIMEVDKDRDGKISFEEFKDIVSGSNVTSSMTLDSF.

4 EF-hand domains span residues 21–56 (EEIE…ASNP), 60–88 (RLFS…FSVH), 90–125 (NKEE…MVGT), and 131–166 (QLQQ…SNVT). Ca(2+) contacts are provided by D34, N36, S38, S40, E45, D66, D68, D72, E77, D103, D105, D107, Y109, E114, D144, D146, D148, K150, and E155.

It belongs to the calcineurin regulatory subunit family. As to quaternary structure, composed of a catalytic subunit (A) and a regulatory subunit (B).

In terms of biological role, regulatory subunit of calcineurin, a calcium-dependent, calmodulin stimulated protein phosphatase. Confers calcium sensitivity. The polypeptide is Calcineurin subunit B (cnb1) (Schizosaccharomyces pombe (strain 972 / ATCC 24843) (Fission yeast)).